We begin with the raw amino-acid sequence, 130 residues long: Small ribosomal subunit protein uS8 (130 aa).

It belongs to the universal ribosomal protein uS8 family. In terms of assembly, part of the 30S ribosomal subunit. Contacts proteins S5 and S12.

One of the primary rRNA binding proteins, it binds directly to 16S rRNA central domain where it helps coordinate assembly of the platform of the 30S subunit. The polypeptide is Small ribosomal subunit protein uS8 (Pseudomonas putida (strain ATCC 700007 / DSM 6899 / JCM 31910 / BCRC 17059 / LMG 24140 / F1)).